We begin with the raw amino-acid sequence, 100 residues long: Large ribosomal subunit protein eL36A (100 aa).

Residue T2 is modified to N-acetylthreonine.

It belongs to the eukaryotic ribosomal protein eL36 family. As to quaternary structure, component of the large ribosomal subunit (LSU). Mature yeast ribosomes consist of a small (40S) and a large (60S) subunit. The 40S small subunit contains 1 molecule of ribosomal RNA (18S rRNA) and 33 different proteins (encoded by 57 genes). The large 60S subunit contains 3 rRNA molecules (25S, 5.8S and 5S rRNA) and 46 different proteins (encoded by 81 genes). In terms of processing, N-terminally acetylated by acetyltransferase NatA.

The protein resides in the cytoplasm. Component of the ribosome, a large ribonucleoprotein complex responsible for the synthesis of proteins in the cell. The small ribosomal subunit (SSU) binds messenger RNAs (mRNAs) and translates the encoded message by selecting cognate aminoacyl-transfer RNA (tRNA) molecules. The large subunit (LSU) contains the ribosomal catalytic site termed the peptidyl transferase center (PTC), which catalyzes the formation of peptide bonds, thereby polymerizing the amino acids delivered by tRNAs into a polypeptide chain. The nascent polypeptides leave the ribosome through a tunnel in the LSU and interact with protein factors that function in enzymatic processing, targeting, and the membrane insertion of nascent chains at the exit of the ribosomal tunnel. The protein is Large ribosomal subunit protein eL36A of Saccharomyces cerevisiae (strain ATCC 204508 / S288c) (Baker's yeast).